A 618-amino-acid chain; its full sequence is DNA mismatch repair protein MutL (618 aa).

It belongs to the DNA mismatch repair MutL/HexB family.

In terms of biological role, this protein is involved in the repair of mismatches in DNA. It is required for dam-dependent methyl-directed DNA mismatch repair. May act as a 'molecular matchmaker', a protein that promotes the formation of a stable complex between two or more DNA-binding proteins in an ATP-dependent manner without itself being part of a final effector complex. In Porphyromonas gingivalis (strain ATCC BAA-308 / W83), this protein is DNA mismatch repair protein MutL.